The sequence spans 20 residues: Apidaecin 3+ (20 aa).

The segment at 1-20 (GKPSRPRPAPIQPRPPHPRL) is disordered.

The protein belongs to the apidaecin family.

The protein localises to the secreted. Its function is as follows. Antimicrobial peptide active against many Gram-negative enterobacterial and plant-associated bacterial species. Not active against other bacterial species like H.pylori, P.mirabilis, B.pertussis or N.gonorrhoeae. In terms of biological role, among others, also active against S.typhi. Functionally, not active against S.typhi. This is Apidaecin 3+ from Pimpla disparis (Parasitic wasp).